The chain runs to 165 residues: Large ribosomal subunit protein uL10 (165 aa).

Belongs to the universal ribosomal protein uL10 family. In terms of assembly, part of the ribosomal stalk of the 50S ribosomal subunit. The N-terminus interacts with L11 and the large rRNA to form the base of the stalk. The C-terminus forms an elongated spine to which L12 dimers bind in a sequential fashion forming a multimeric L10(L12)X complex.

Forms part of the ribosomal stalk, playing a central role in the interaction of the ribosome with GTP-bound translation factors. In Salmonella agona (strain SL483), this protein is Large ribosomal subunit protein uL10.